Here is a 203-residue protein sequence, read N- to C-terminus: Putative 3-methyladenine DNA glycosylase (203 aa).

Belongs to the DNA glycosylase MPG family.

The sequence is that of Putative 3-methyladenine DNA glycosylase from Clostridium beijerinckii (strain ATCC 51743 / NCIMB 8052) (Clostridium acetobutylicum).